Consider the following 703-residue polypeptide: Bifunctional arginine dihydrolase/ornithine cyclodeaminase AgrE (703 aa).

The segment at 10–269 (CPPDHYDVDY…GAAKCLTLRV (260 aa)) is arginine dihydrolase. Asn22, Asp65, Asn71, Arg90, and Arg139 together coordinate L-arginine. Position 22 (Asn22) interacts with L-ornithine. The L-ornithine site is built by Arg90, Arg139, and His168. Residue His168 is the Proton donor/acceptor of the active site. The L-arginine site is built by Asp170 and Ala258. Cys264 is an L-ornithine binding site. Cys264 acts as the Nucleophile in catalysis. Positions 285–694 (SRIIRIEGHL…SLLTQQLDKL (410 aa)) are ornithine cyclodeaminase. Positions 524, 525, 603, 635, 636, 637, 638, 656, 679, and 680 each coordinate NAD(+).

In the N-terminal section; belongs to the DDAH family. This sequence in the C-terminal section; belongs to the AgrE/ArgZ ornithine cyclodeaminase family. As to quaternary structure, homotetramer. Requires NAD(+) as cofactor.

The catalysed reaction is L-arginine + 2 H2O + 2 H(+) = L-ornithine + 2 NH4(+) + CO2. It carries out the reaction L-ornithine = L-proline + NH4(+). With respect to regulation, ornithine cyclodeaminase activity is inhibited by ATP. Bifunctional enzyme involved in a cyanobacterial arginine utilization pathway that produces glutamate and enables cellular adaptation to nitrogen fluctuations. Catalyzes the hydrolysis of arginine to ornithine, with the release of ammonia and carbon dioxide. Then, catalyzes the conversion of ornithine to proline, with the release of ammonia. This Nostoc sp. (strain PCC 7120 / SAG 25.82 / UTEX 2576) protein is Bifunctional arginine dihydrolase/ornithine cyclodeaminase AgrE.